A 185-amino-acid chain; its full sequence is Large ribosomal subunit protein uL5 (185 aa).

The protein belongs to the universal ribosomal protein uL5 family. In terms of assembly, part of the 50S ribosomal subunit; part of the 5S rRNA/L5/L18/L25 subcomplex. Contacts the 5S rRNA and the P site tRNA. Forms a bridge to the 30S subunit in the 70S ribosome.

In terms of biological role, this is one of the proteins that bind and probably mediate the attachment of the 5S RNA into the large ribosomal subunit, where it forms part of the central protuberance. In the 70S ribosome it contacts protein S13 of the 30S subunit (bridge B1b), connecting the 2 subunits; this bridge is implicated in subunit movement. Contacts the P site tRNA; the 5S rRNA and some of its associated proteins might help stabilize positioning of ribosome-bound tRNAs. This Caulobacter vibrioides (strain NA1000 / CB15N) (Caulobacter crescentus) protein is Large ribosomal subunit protein uL5.